The following is a 276-amino-acid chain: Octanoyltransferase LipM (276 aa).

Residues 31–246 (GLIPPVIRFY…GFAKSLQIEL (216 aa)) form the BPL/LPL catalytic domain. Cys148 acts as the Acyl-thioester intermediate in catalysis.

It belongs to the octanoyltransferase LipM family. In terms of assembly, monomer.

The enzyme catalyses octanoyl-[ACP] + L-lysyl-[protein] = N(6)-octanoyl-L-lysyl-[protein] + holo-[ACP] + H(+). Its pathway is protein modification; protein lipoylation via endogenous pathway; protein N(6)-(lipoyl)lysine from octanoyl-[acyl-carrier-protein]. Functionally, catalyzes the transfer of endogenously produced octanoic acid from octanoyl-acyl-carrier-protein onto the lipoyl domain of GcvH, an intermediate carrier during protein lipoylation. The polypeptide is Octanoyltransferase LipM (Lysinibacillus sphaericus (strain C3-41)).